A 251-amino-acid chain; its full sequence is tRNA pseudouridine synthase A (251 aa).

The active-site Nucleophile is aspartate 53. A substrate-binding site is contributed by tyrosine 110.

This sequence belongs to the tRNA pseudouridine synthase TruA family. In terms of assembly, homodimer.

It carries out the reaction uridine(38/39/40) in tRNA = pseudouridine(38/39/40) in tRNA. Functionally, formation of pseudouridine at positions 38, 39 and 40 in the anticodon stem and loop of transfer RNAs. This is tRNA pseudouridine synthase A from Mesoplasma florum (strain ATCC 33453 / NBRC 100688 / NCTC 11704 / L1) (Acholeplasma florum).